The primary structure comprises 268 residues: Nickel import ATP-binding protein NikE (268 aa).

Residues 4 to 252 enclose the ABC transporter domain; sequence LNISGLSHHY…SSDAGRVLQN (249 aa). ATP is bound at residue 45 to 52; that stretch reads GRSGCGKS.

This sequence belongs to the ABC transporter superfamily. Nickel importer (TC 3.A.1.5.3) family. As to quaternary structure, the complex is composed of two ATP-binding proteins (NikD and NikE), two transmembrane proteins (NikB and NikC) and a solute-binding protein (NikA).

The protein localises to the cell inner membrane. It carries out the reaction Ni(2+)(out) + ATP + H2O = Ni(2+)(in) + ADP + phosphate + H(+). In terms of biological role, part of the ABC transporter complex NikABCDE involved in nickel import. Responsible for energy coupling to the transport system. The sequence is that of Nickel import ATP-binding protein NikE from Escherichia coli (strain K12).